A 327-amino-acid polypeptide reads, in one-letter code: Transaldolase (327 aa).

Lys132 serves as the catalytic Schiff-base intermediate with substrate.

It belongs to the transaldolase family. Type 1 subfamily.

It is found in the cytoplasm. The catalysed reaction is D-sedoheptulose 7-phosphate + D-glyceraldehyde 3-phosphate = D-erythrose 4-phosphate + beta-D-fructose 6-phosphate. It functions in the pathway carbohydrate degradation; pentose phosphate pathway; D-glyceraldehyde 3-phosphate and beta-D-fructose 6-phosphate from D-ribose 5-phosphate and D-xylulose 5-phosphate (non-oxidative stage): step 2/3. Transaldolase is important for the balance of metabolites in the pentose-phosphate pathway. This is Transaldolase from Chlamydia trachomatis serovar D (strain ATCC VR-885 / DSM 19411 / UW-3/Cx).